The sequence spans 543 residues: CTP synthase (543 aa).

The amidoligase domain stretch occupies residues 1–265; that stretch reads MTRYIFVTGG…DDIVVERFGL (265 aa). Serine 13 is a CTP binding site. Position 13 (serine 13) interacts with UTP. Residues 14-19 and aspartate 71 each bind ATP; that span reads SLGKGI. Aspartate 71 and glutamate 139 together coordinate Mg(2+). Residues 146–148, 186–191, and lysine 222 contribute to the CTP site; these read DIE and KTKPTQ. UTP-binding positions include 186 to 191 and lysine 222; that span reads KTKPTQ. The Glutamine amidotransferase type-1 domain occupies 290 to 541; that stretch reads TIAMVGKYME…VNAALAQKAR (252 aa). Glycine 351 is a binding site for L-glutamine. Catalysis depends on cysteine 378, which acts as the Nucleophile; for glutamine hydrolysis. L-glutamine contacts are provided by residues 379–382, glutamate 402, and arginine 469; that span reads LGMQ. Active-site residues include histidine 514 and glutamate 516.

It belongs to the CTP synthase family. As to quaternary structure, homotetramer.

It catalyses the reaction UTP + L-glutamine + ATP + H2O = CTP + L-glutamate + ADP + phosphate + 2 H(+). It carries out the reaction L-glutamine + H2O = L-glutamate + NH4(+). The enzyme catalyses UTP + NH4(+) + ATP = CTP + ADP + phosphate + 2 H(+). Its pathway is pyrimidine metabolism; CTP biosynthesis via de novo pathway; CTP from UDP: step 2/2. Allosterically activated by GTP, when glutamine is the substrate; GTP has no effect on the reaction when ammonia is the substrate. The allosteric effector GTP functions by stabilizing the protein conformation that binds the tetrahedral intermediate(s) formed during glutamine hydrolysis. Inhibited by the product CTP, via allosteric rather than competitive inhibition. In terms of biological role, catalyzes the ATP-dependent amination of UTP to CTP with either L-glutamine or ammonia as the source of nitrogen. Regulates intracellular CTP levels through interactions with the four ribonucleotide triphosphates. This is CTP synthase from Azotobacter vinelandii (strain DJ / ATCC BAA-1303).